The following is a 637-amino-acid chain: Early transcription factor 70 kDa subunit (637 aa).

Belongs to the helicase family. VETF subfamily. Heterodimer of a 70 kDa and a 82 kDa subunit. Part of the early transcription complex composed of ETF, RAP94/OPG109, and the DNA-directed RNA polymerase. Apparently non-glycosylated.

It localises to the virion. Its function is as follows. Acts with RNA polymerase to initiate transcription from early gene promoters. Is recruited by the RPO-associated protein of 94 kDa RAP94/OPG109 to form the early transcription complex, which also contains the core RNA polymerase. ETF heterodimer binds to early gene promoters. This is Early transcription factor 70 kDa subunit (OPG118) from Monkeypox virus.